Reading from the N-terminus, the 451-residue chain is 3-carboxy-cis,cis-muconate cycloisomerase (451 aa).

It belongs to the class-II fumarase/aspartase family.

It carries out the reaction 2-(carboxymethyl)-5-oxo-2,5-dihydro-2-furoate = 3-carboxy-cis,cis-muconate + H(+). Its function is as follows. Catalyzes an anti cycloisomerization. The chain is 3-carboxy-cis,cis-muconate cycloisomerase (pcaB) from Bradyrhizobium diazoefficiens (strain JCM 10833 / BCRC 13528 / IAM 13628 / NBRC 14792 / USDA 110).